We begin with the raw amino-acid sequence, 295 residues long: Perivine-Nbeta-methyltransferase (295 aa).

The interval isoleucine 76–glycine 85 is SAM motif I. The Vacuolar targeting signal signature appears at aspartate 138 to isoleucine 144. The tract at residues glycine 139 to isoleucine 147 is SAM motif II. Residues valine 166–isoleucine 175 form an SAM motif III region.

The protein belongs to the class I-like SAM-binding methyltransferase superfamily. gTMT family. In terms of assembly, homodimer. As to expression, mainly expressed in young leaves, and, to a lower extent, in mature leaves, flowers, stems and roots (at protein level). Transcripts levels are highest in flowers, moderate in leaves and low in roots and stems.

The protein localises to the vacuole membrane. The catalysed reaction is perivine + S-adenosyl-L-methionine = vobasine + S-adenosyl-L-homocysteine + 2 H(+). Its pathway is alkaloid biosynthesis; vindoline biosynthesis. In terms of biological role, S-adenosyl-L-methionine-dependent N-methyltransferase involved in the biosynthesis of biologically active monoterpenoid indole alkaloids (MIAs) natural products including vindoline. Catalyzes the conversion of perivine to Nbeta-methylperivine (vobasine) by methylating its N4 nitrogen. Inactive with picrinine as substrate. The protein is Perivine-Nbeta-methyltransferase of Catharanthus roseus (Madagascar periwinkle).